The chain runs to 134 residues: Fluoride-specific ion channel FluC 2 (134 aa).

4 consecutive transmembrane segments (helical) span residues 1-21 (MNYF…EITG), 28-48 (IFPV…LFFM), 68-88 (GFLG…LLLF), and 92-112 (LLIG…SGIL). Residues Gly-71 and Thr-74 each contribute to the Na(+) site.

It belongs to the fluoride channel Fluc/FEX (TC 1.A.43) family.

It localises to the cell membrane. The enzyme catalyses fluoride(in) = fluoride(out). Na(+) is not transported, but it plays an essential structural role and its presence is essential for fluoride channel function. Functionally, fluoride-specific ion channel. Important for reducing fluoride concentration in the cell, thus reducing its toxicity. This chain is Fluoride-specific ion channel FluC 2, found in Carboxydothermus hydrogenoformans (strain ATCC BAA-161 / DSM 6008 / Z-2901).